The chain runs to 2027 residues: Citron Rho-interacting kinase (2027 aa).

Met-1 carries the N-acetylmethionine modification. The Protein kinase domain occupies 97–360 (FEVRSLVGCG…FEGLCCHPFF (264 aa)). ATP is bound by residues 103–111 (VGCGHFAEV) and Lys-126. The active-site Proton acceptor is the Asp-221. The region spanning 361–431 (SKIDWNNIRN…SKALGILGRS (71 aa)) is the AGC-kinase C-terminal domain. Phosphoserine is present on residues Ser-433, Ser-440, Ser-480, and Ser-582. Residues 453 to 1297 (IKSKELQDSQ…SAREEAAHRK (845 aa)) adopt a coiled-coil conformation. Residues 1091–1302 (LAVKEHKAEI…AAHRKATDHP (212 aa)) form an interaction with Rho/Rac region. Tyr-1196 carries the phosphotyrosine modification. The segment covering 1290–1303 (REEAAHRKATDHPH) has biased composition (basic and acidic residues). Disordered regions lie at residues 1290–1310 (REEAAHRKATDHPHPSTPATA) and 1322–1351 (SPEHQPSAMSLLAPPSSRRKESSTPEEFSR). The segment covering 1327-1337 (PSAMSLLAPPS) has biased composition (low complexity). Over residues 1339–1351 (RRKESSTPEEFSR) the composition is skewed to basic and acidic residues. Residues 1362–1411 (PHRFNVGLNMRATKCAVCLDTVHFGRQASKCLECQVMCHPKCSTCLPATC) form a Phorbol-ester/DAG-type zinc finger. Positions 1443–1563 (SLHLEGWMKV…WVTALESVVA (121 aa)) constitute a PH domain. Residues 1591-1881 (RLDMNCTLPF…RYLGPAISSG (291 aa)) form the CNH domain. Lys-1721 carries the post-translational modification N6-acetyllysine. The interval 1905–2012 (ESGTEHHRGP…RGRLPAGAVR (108 aa)) is disordered. Ser-1940 carries the post-translational modification Phosphoserine. The segment covering 1948–2003 (SHPREPSTPHRYREGRTELRRDKSPGRPLEREKSPGRMLSTRRERSPGRLFEDSSR) has biased composition (basic and acidic residues). The short motif at 1953–1958 (PSTPHR) is the SH3-binding element. Ser-1993 bears the Phosphoserine mark. Thr-2013 carries the post-translational modification Phosphothreonine.

It belongs to the protein kinase superfamily. AGC Ser/Thr protein kinase family. As to quaternary structure, directly interacts with KIF14 depending on the activation state (stronger interaction with the kinase-dead form). Homodimer. Interacts with TTC3.

The protein resides in the cytoplasm. The enzyme catalyses L-seryl-[protein] + ATP = O-phospho-L-seryl-[protein] + ADP + H(+). It catalyses the reaction L-threonyl-[protein] + ATP = O-phospho-L-threonyl-[protein] + ADP + H(+). Its function is as follows. Plays a role in cytokinesis. Required for KIF14 localization to the central spindle and midbody. Putative RHO/RAC effector that binds to the GTP-bound forms of RHO and RAC1. It probably binds p21 with a tighter specificity in vivo. Displays serine/threonine protein kinase activity. Plays an important role in the regulation of cytokinesis and the development of the central nervous system. Phosphorylates MYL9/MLC2. This chain is Citron Rho-interacting kinase (CIT), found in Homo sapiens (Human).